A 100-amino-acid polypeptide reads, in one-letter code: uncharacterized protein (100 aa).

A disordered region spans residues 42–84 (PGEPWRTAGGIGEGGAGGDGAAAGGEGDVHGRPAGAEDGEDGA). Over residues 50–67 (GGIGEGGAGGDGAAAGGE) the composition is skewed to gly residues.

This is an uncharacterized protein from Torque teno tamarin virus (isolate So-TTV2).